A 419-amino-acid chain; its full sequence is 3-isopropylmalate dehydratase large subunit (419 aa).

[4Fe-4S] cluster is bound by residues cysteine 301, cysteine 361, and cysteine 364.

Belongs to the aconitase/IPM isomerase family. LeuC type 2 subfamily. In terms of assembly, heterodimer of LeuC and LeuD. [4Fe-4S] cluster is required as a cofactor.

The enzyme catalyses (2R,3S)-3-isopropylmalate = (2S)-2-isopropylmalate. The protein operates within amino-acid biosynthesis; L-leucine biosynthesis; L-leucine from 3-methyl-2-oxobutanoate: step 2/4. Its function is as follows. Catalyzes the isomerization between 2-isopropylmalate and 3-isopropylmalate, via the formation of 2-isopropylmaleate. The chain is 3-isopropylmalate dehydratase large subunit from Campylobacter hominis (strain ATCC BAA-381 / DSM 21671 / CCUG 45161 / LMG 19568 / NCTC 13146 / CH001A).